Here is a 244-residue protein sequence, read N- to C-terminus: Phosphoadenosine 5'-phosphosulfate reductase (244 aa).

Cysteine 239 (nucleophile; cysteine thiosulfonate intermediate) is an active-site residue.

Belongs to the PAPS reductase family. CysH subfamily.

It is found in the cytoplasm. It carries out the reaction [thioredoxin]-disulfide + sulfite + adenosine 3',5'-bisphosphate + 2 H(+) = [thioredoxin]-dithiol + 3'-phosphoadenylyl sulfate. It participates in sulfur metabolism; hydrogen sulfide biosynthesis; sulfite from sulfate: step 3/3. Its function is as follows. Catalyzes the formation of sulfite from phosphoadenosine 5'-phosphosulfate (PAPS) using thioredoxin as an electron donor. This chain is Phosphoadenosine 5'-phosphosulfate reductase, found in Salmonella agona (strain SL483).